The chain runs to 729 residues: Fatty acid oxidation complex subunit alpha (729 aa).

Positions 1-189 are enoyl-CoA hydratase/isomerase; it reads MLYKGDTLYL…KIGLVDGVVK (189 aa). Position 296 (aspartate 296) interacts with substrate. Positions 311–729 are 3-hydroxyacyl-CoA dehydrogenase; that stretch reads ETPKQAAVLG…ARPVGDLKTA (419 aa). Residues methionine 324, aspartate 343, 400–402, lysine 407, and serine 429 each bind NAD(+); that span reads VVE. Histidine 450 functions as the For 3-hydroxyacyl-CoA dehydrogenase activity in the catalytic mechanism. Residue asparagine 453 coordinates NAD(+). 2 residues coordinate substrate: asparagine 500 and tyrosine 660. Residues 708-729 form a disordered region; sequence RHNEPYYPPVEPARPVGDLKTA.

The protein in the N-terminal section; belongs to the enoyl-CoA hydratase/isomerase family. This sequence in the C-terminal section; belongs to the 3-hydroxyacyl-CoA dehydrogenase family. Heterotetramer of two alpha chains (FadB) and two beta chains (FadA).

It carries out the reaction a (3S)-3-hydroxyacyl-CoA + NAD(+) = a 3-oxoacyl-CoA + NADH + H(+). The catalysed reaction is a (3S)-3-hydroxyacyl-CoA = a (2E)-enoyl-CoA + H2O. It catalyses the reaction a 4-saturated-(3S)-3-hydroxyacyl-CoA = a (3E)-enoyl-CoA + H2O. The enzyme catalyses (3S)-3-hydroxybutanoyl-CoA = (3R)-3-hydroxybutanoyl-CoA. It carries out the reaction a (3Z)-enoyl-CoA = a 4-saturated (2E)-enoyl-CoA. The catalysed reaction is a (3E)-enoyl-CoA = a 4-saturated (2E)-enoyl-CoA. The protein operates within lipid metabolism; fatty acid beta-oxidation. Functionally, involved in the aerobic and anaerobic degradation of long-chain fatty acids via beta-oxidation cycle. Catalyzes the formation of 3-oxoacyl-CoA from enoyl-CoA via L-3-hydroxyacyl-CoA. It can also use D-3-hydroxyacyl-CoA and cis-3-enoyl-CoA as substrate. This is Fatty acid oxidation complex subunit alpha from Escherichia coli O6:H1 (strain CFT073 / ATCC 700928 / UPEC).